Reading from the N-terminus, the 34-residue chain is Cytochrome b6-f complex subunit 8 (34 aa).

A helical transmembrane segment spans residues 3 to 23 (IFQIGWAALAAIFTFSIAMVV).

This sequence belongs to the PetN family. The 4 large subunits of the cytochrome b6-f complex are cytochrome b6, subunit IV (17 kDa polypeptide, PetD), cytochrome f and the Rieske protein, while the 4 small subunits are PetG, PetL, PetM and PetN. The complex functions as a dimer.

It localises to the cellular thylakoid membrane. In terms of biological role, component of the cytochrome b6-f complex, which mediates electron transfer between photosystem II (PSII) and photosystem I (PSI), cyclic electron flow around PSI, and state transitions. This is Cytochrome b6-f complex subunit 8 from Prochlorococcus marinus subsp. pastoris (strain CCMP1986 / NIES-2087 / MED4).